We begin with the raw amino-acid sequence, 510 residues long: 2,3-bisphosphoglycerate-independent phosphoglycerate mutase (510 aa).

Asp-14 and Ser-64 together coordinate Mn(2+). Ser-64 acts as the Phosphoserine intermediate in catalysis. Substrate is bound by residues His-125, 155 to 156, Arg-187, Arg-193, 259 to 262, and Lys-332; these read RD and RADR. Residues Asp-399, His-403, Asp-440, His-441, and His-459 each coordinate Mn(2+).

This sequence belongs to the BPG-independent phosphoglycerate mutase family. Monomer. Mn(2+) is required as a cofactor.

It catalyses the reaction (2R)-2-phosphoglycerate = (2R)-3-phosphoglycerate. Its pathway is carbohydrate degradation; glycolysis; pyruvate from D-glyceraldehyde 3-phosphate: step 3/5. In terms of biological role, catalyzes the interconversion of 2-phosphoglycerate and 3-phosphoglycerate. Essential for the growth and pathogenicity on the host plant. The polypeptide is 2,3-bisphosphoglycerate-independent phosphoglycerate mutase (Pseudomonas syringae pv. tomato (strain ATCC BAA-871 / DC3000)).